The chain runs to 202 residues: MDLEKIYKDAGAYLEGHFLLSSGNHSQFYLQSAKVLEDPALAGKLADELAAVIEKFGIKFDSVCSPALGGILAGYELARAAKKRFIFTERVEKVMSLRRGFEVKKGEKFIVCEDIITTGGSALEAAHVIESLGGEVVGFAALANRGFCKVANLGNDSKPNAKLPSDKPFFALGNFEFEIYEPEHCPLCKSGSKAIKPGSRGN.

Residues Lys-93 and 113–121 (EDIITTGGS) each bind 5-phospho-alpha-D-ribose 1-diphosphate. Residues Thr-117 and Arg-145 each coordinate orotate.

It belongs to the purine/pyrimidine phosphoribosyltransferase family. PyrE subfamily. In terms of assembly, homodimer. The cofactor is Mg(2+).

It catalyses the reaction orotidine 5'-phosphate + diphosphate = orotate + 5-phospho-alpha-D-ribose 1-diphosphate. Its pathway is pyrimidine metabolism; UMP biosynthesis via de novo pathway; UMP from orotate: step 1/2. Catalyzes the transfer of a ribosyl phosphate group from 5-phosphoribose 1-diphosphate to orotate, leading to the formation of orotidine monophosphate (OMP). The sequence is that of Orotate phosphoribosyltransferase from Campylobacter concisus (strain 13826).